Reading from the N-terminus, the 538-residue chain is Putative outer membrane porin BglH (538 aa).

An N-terminal signal peptide occupies residues 1–25 (MFRRNIITSAILLMAPLAFSAQSLA).

Belongs to the porin LamB (TC 1.B.3) family.

The protein localises to the cell outer membrane. Functionally, may be a sugar porin with a broad carbohydrate specificity. The polypeptide is Putative outer membrane porin BglH (bglH) (Escherichia coli (strain UTI89 / UPEC)).